Reading from the N-terminus, the 477-residue chain is Glycogen synthase (477 aa).

Lys-15 is a binding site for ADP-alpha-D-glucose.

It belongs to the glycosyltransferase 1 family. Bacterial/plant glycogen synthase subfamily.

It catalyses the reaction [(1-&gt;4)-alpha-D-glucosyl](n) + ADP-alpha-D-glucose = [(1-&gt;4)-alpha-D-glucosyl](n+1) + ADP + H(+). It functions in the pathway glycan biosynthesis; glycogen biosynthesis. In terms of biological role, synthesizes alpha-1,4-glucan chains using ADP-glucose. In Shigella flexneri serotype 5b (strain 8401), this protein is Glycogen synthase.